We begin with the raw amino-acid sequence, 338 residues long: MAPIKVGINGFGRIGRIVFRNAVEHPDIEVVAVNDPFIETTYAAYMLKYDSSHGLFKGEVEVDGKDLVVNGKKVRFYTERNPADIKWSETGAEYVVESTGVFTTTEKAKAHLVGGAKKVIISAPSADAPMYVMGVNESDYDGSADVISNASCTTNCLAPLAKVINDNYGIVEGLMTTVHSYTATQKTVDGPSAKDWRGGRGAAQNIIPSSTGAAKAVGKVIPALNGKLTGMSIRVPTANVSVVDLTVRIEKGASYEEITETIKKAADGPLKGVLAYTGDDVVSSDMLGNTNSSIFDIKAGISLNKNFVKLVSWYDNEWGYSRRVLDLLAHVAKVDASK.

NAD(+) contacts are provided by residues 13–14, Asp35, and Arg80; that span reads RI. D-glyceraldehyde 3-phosphate contacts are provided by residues 151 to 153, Thr182, 211 to 212, and Arg234; these read SCT and TG. The Nucleophile role is filled by Cys152. Asn316 is an NAD(+) binding site.

Belongs to the glyceraldehyde-3-phosphate dehydrogenase family. In terms of assembly, homotetramer.

The protein resides in the cytoplasm. The enzyme catalyses D-glyceraldehyde 3-phosphate + phosphate + NAD(+) = (2R)-3-phospho-glyceroyl phosphate + NADH + H(+). It participates in carbohydrate degradation; glycolysis; pyruvate from D-glyceraldehyde 3-phosphate: step 1/5. Inhibited by koningic acid through the interaction of cysteine residues with koningic acid even at very low concentrations. The protein is Glyceraldehyde-3-phosphate dehydrogenase 2 (gpd2) of Trichoderma koningii (Hypocrea koningii).